A 301-amino-acid polypeptide reads, in one-letter code: Ribonuclease Z (301 aa).

Residues histidine 61, histidine 63, aspartate 65, histidine 66, histidine 140, aspartate 211, and histidine 269 each coordinate Zn(2+). Aspartate 65 (proton acceptor) is an active-site residue.

This sequence belongs to the RNase Z family. As to quaternary structure, homodimer. The cofactor is Zn(2+).

It catalyses the reaction Endonucleolytic cleavage of RNA, removing extra 3' nucleotides from tRNA precursor, generating 3' termini of tRNAs. A 3'-hydroxy group is left at the tRNA terminus and a 5'-phosphoryl group is left at the trailer molecule.. Zinc phosphodiesterase, which displays some tRNA 3'-processing endonuclease activity. Probably involved in tRNA maturation, by removing a 3'-trailer from precursor tRNA. In Bradyrhizobium sp. (strain ORS 278), this protein is Ribonuclease Z.